Here is a 157-residue protein sequence, read N- to C-terminus: Ribosomal RNA large subunit methyltransferase H (157 aa).

Residues G106 and 125 to 130 (LSEMTF) each bind S-adenosyl-L-methionine.

Belongs to the RNA methyltransferase RlmH family. In terms of assembly, homodimer.

The protein resides in the cytoplasm. The enzyme catalyses pseudouridine(1915) in 23S rRNA + S-adenosyl-L-methionine = N(3)-methylpseudouridine(1915) in 23S rRNA + S-adenosyl-L-homocysteine + H(+). Functionally, specifically methylates the pseudouridine at position 1915 (m3Psi1915) in 23S rRNA. In Syntrophobacter fumaroxidans (strain DSM 10017 / MPOB), this protein is Ribosomal RNA large subunit methyltransferase H.